A 553-amino-acid chain; its full sequence is Muellerian-inhibiting factor (553 aa).

The signal sequence occupies residues 1–22 (MQGPHLSLLLLLLATMGAVLQA). A propeptide spanning residues 23–445 (DTVEELTNTR…GREGRGRAGR (423 aa)) is cleaved from the precursor. N-linked (GlcNAc...) asparagine glycosylation is found at N325 and N409. 3 cysteine pairs are disulfide-bonded: C455–C519, C481–C550, and C485–C552.

Belongs to the TGF-beta family. Homodimer; disulfide-linked. Post-translationally, preproprotein is proteolytically processed to generate N- and C-terminal cleavage products that homodimerize and associate to form a biologically active non-covalent complex. Binding of the non-covalent complex to AMHR2 induces dissociation of the pro-region from the mature C-terminal dimer. The N-terminal portion of the protein, despite having no intrinsic activity, has the role of amplifying the activity of the C-terminus. Mainly expressed in granulosa cells from preantral and small antral follicles.

It localises to the secreted. Its function is as follows. Plays an important role in several reproductive functions. Induces Muellerian duct regression during male fetal sexual differentiation and plays a role in Leydig cell differentiation and function. In female acts as a negative regulator of the primordial to primary follicle transition and decreases FSH sensitivity of growing follicles. AMH signals by binding to a specific type-II receptor, AMHR2, that heterodimerizes with type-I receptors (ACVR1 and BMPR1A), and recruiting SMAD proteins that are translocated to the nucleus to regulate target gene expression. In Rattus norvegicus (Rat), this protein is Muellerian-inhibiting factor (Amh).